The sequence spans 80 residues: Protein FAM229B (80 aa).

The segment at 1–45 (MPFRFGTQPRRFPVEGGDSSIELESGLSSSASCTGKETSPNRQLR) is disordered. Residues 15 to 32 (EGGDSSIELESGLSSSAS) are compositionally biased toward low complexity. A compositionally biased stretch (polar residues) spans 33–42 (CTGKETSPNR).

This sequence belongs to the FAM229 family.

This Mus musculus (Mouse) protein is Protein FAM229B (Fam229b).